Reading from the N-terminus, the 418-residue chain is NADH-quinone oxidoreductase subunit H (418 aa).

9 consecutive transmembrane segments (helical) span residues 15–35, 83–103, 123–143, 164–184, 197–217, 262–282, 287–307, 321–341, and 349–369; these read LVLG…LVAI, FVYF…FAFI, LPVA…GIVL, VISY…YAGS, VWFV…MVGE, LATA…MWAG, WWPV…YFWL, GLGW…AAVI, and YAHW…ALVL. Positions 394–418 are disordered; sequence AAHRAGFHPGIPDTAAAGESAGGRE.

This sequence belongs to the complex I subunit 1 family. NDH-1 is composed of 14 different subunits. Subunits NuoA, H, J, K, L, M, N constitute the membrane sector of the complex.

Its subcellular location is the cell membrane. It catalyses the reaction a quinone + NADH + 5 H(+)(in) = a quinol + NAD(+) + 4 H(+)(out). Functionally, NDH-1 shuttles electrons from NADH, via FMN and iron-sulfur (Fe-S) centers, to quinones in the respiratory chain. The immediate electron acceptor for the enzyme in this species is believed to be menaquinone. Couples the redox reaction to proton translocation (for every two electrons transferred, four hydrogen ions are translocated across the cytoplasmic membrane), and thus conserves the redox energy in a proton gradient. This subunit may bind ubiquinone. The protein is NADH-quinone oxidoreductase subunit H of Mycobacterium avium (strain 104).